The chain runs to 491 residues: MDSISTAILLLLLALVCLLLTLSSRDKGKLPPGPRPLSILGNLLLLCSQDMLTSLTKLSKEYGSMYTVHLGPRRVVVLSGYQAVKEALVDQGEEFSGRGDYPAFFNFTKGNGIAFSSGDRWKVLRQFSIQILRNFGMGKRSIEERILEEGSFLLAELRKTEGEPFDPTFVLSRSVSNIICSVLFGSRFDYDDERLLTIIRLINDNFQIMSSPWGELYDIFPSLLDWVPGPHQRIFQNFKCLRDLIAHSVHDHQASLDPRSPRDFIQCFLTKMAEEKEDPLSHFHMDTLLMTTHNLLFGGTKTVSTTLHHAFLALMKYPKVQARVQEEIDLVVGRARLPALKDRAAMPYTDAVIHEVQRFADIIPMNLPHRVTRDTAFRGFLIPKGTDVITLLNTVHYDPSQFLTPQEFNPEHFLDANQSFKKSPAFMPFSAGRRLCLGESLARMELFLYLTAILQSFSLQPLGAPEDIDLTPLSSGLGNLPRPFQLCLRPR.

Residue cysteine 436 coordinates heme.

Belongs to the cytochrome P450 family. Requires heme as cofactor. As to expression, expressed in lung. Rarely detected in liver and placenta.

The protein resides in the endoplasmic reticulum membrane. Its subcellular location is the microsome membrane. It carries out the reaction an organic molecule + reduced [NADPH--hemoprotein reductase] + O2 = an alcohol + oxidized [NADPH--hemoprotein reductase] + H2O + H(+). Its function is as follows. May be involved in the metabolism of various pneumotoxicants including naphthalene. Is able to dealkylate ethoxycoumarin, propoxycoumarin, and pentoxyresorufin but possesses no activity toward ethoxyresorufin and only trace dearylation activity toward benzyloxyresorufin. Bioactivates 3-methylindole (3MI) by dehydrogenation to the putative electrophile 3-methylene-indolenine. The protein is Cytochrome P450 2F1 (CYP2F1) of Homo sapiens (Human).